The following is a 120-amino-acid chain: Protein ORF-C (120 aa).

The protein localises to the host mitochondrion. Induces alteration of mitochondrial function that results in apoptosis contributing to tumor regression. The chain is Protein ORF-C (orfC) from Walleye dermal sarcoma virus (WDSV).